A 379-amino-acid chain; its full sequence is UDP-4-amino-4-deoxy-L-arabinose--oxoglutarate aminotransferase (379 aa).

N6-(pyridoxal phosphate)lysine is present on lysine 182.

Belongs to the DegT/DnrJ/EryC1 family. ArnB subfamily. As to quaternary structure, homodimer. Pyridoxal 5'-phosphate is required as a cofactor.

It catalyses the reaction UDP-4-amino-4-deoxy-beta-L-arabinose + 2-oxoglutarate = UDP-beta-L-threo-pentopyranos-4-ulose + L-glutamate. It functions in the pathway nucleotide-sugar biosynthesis; UDP-4-deoxy-4-formamido-beta-L-arabinose biosynthesis; UDP-4-deoxy-4-formamido-beta-L-arabinose from UDP-alpha-D-glucuronate: step 2/3. The protein operates within bacterial outer membrane biogenesis; lipopolysaccharide biosynthesis. In terms of biological role, catalyzes the conversion of UDP-4-keto-arabinose (UDP-Ara4O) to UDP-4-amino-4-deoxy-L-arabinose (UDP-L-Ara4N). The modified arabinose is attached to lipid A and is required for resistance to polymyxin and cationic antimicrobial peptides. This Salmonella schwarzengrund (strain CVM19633) protein is UDP-4-amino-4-deoxy-L-arabinose--oxoglutarate aminotransferase.